A 430-amino-acid polypeptide reads, in one-letter code: Adenylosuccinate synthetase (430 aa).

GTP-binding positions include 12-18 and 40-42; these read GDEGKGK and GHT. Asp13 (proton acceptor) is an active-site residue. Mg(2+) is bound by residues Asp13 and Gly40. IMP contacts are provided by residues 13–16, 38–41, Thr128, Arg142, Gln223, Thr238, and Arg302; these read DEGK and NAGH. His41 acts as the Proton donor in catalysis. A substrate-binding site is contributed by 298-304; sequence VNTGRTR. Residues Arg304, 330 to 332, and 412 to 414 contribute to the GTP site; these read KLD and GVG.

The protein belongs to the adenylosuccinate synthetase family. In terms of assembly, homodimer. Mg(2+) is required as a cofactor.

Its subcellular location is the cytoplasm. The enzyme catalyses IMP + L-aspartate + GTP = N(6)-(1,2-dicarboxyethyl)-AMP + GDP + phosphate + 2 H(+). It participates in purine metabolism; AMP biosynthesis via de novo pathway; AMP from IMP: step 1/2. Its function is as follows. Plays an important role in the de novo pathway of purine nucleotide biosynthesis. Catalyzes the first committed step in the biosynthesis of AMP from IMP. This chain is Adenylosuccinate synthetase, found in Corynebacterium ammoniagenes (Brevibacterium ammoniagenes).